The primary structure comprises 321 residues: tRNA(Ile)-lysidine synthase (321 aa).

Position 21–26 (21–26) interacts with ATP; the sequence is SYGSDS.

It belongs to the tRNA(Ile)-lysidine synthase family.

Its subcellular location is the cytoplasm. The enzyme catalyses cytidine(34) in tRNA(Ile2) + L-lysine + ATP = lysidine(34) in tRNA(Ile2) + AMP + diphosphate + H(+). In terms of biological role, ligates lysine onto the cytidine present at position 34 of the AUA codon-specific tRNA(Ile) that contains the anticodon CAU, in an ATP-dependent manner. Cytidine is converted to lysidine, thus changing the amino acid specificity of the tRNA from methionine to isoleucine. This chain is tRNA(Ile)-lysidine synthase, found in Campylobacter jejuni (strain RM1221).